We begin with the raw amino-acid sequence, 331 residues long: 6-phosphogluconolactonase (331 aa).

Lys-287 bears the N6-acetyllysine mark.

The protein belongs to the cycloisomerase 2 family.

The catalysed reaction is 6-phospho-D-glucono-1,5-lactone + H2O = 6-phospho-D-gluconate + H(+). The protein operates within carbohydrate degradation; pentose phosphate pathway; D-ribulose 5-phosphate from D-glucose 6-phosphate (oxidative stage): step 2/3. In terms of biological role, catalyzes the hydrolysis of 6-phosphogluconolactone to 6-phosphogluconate. This is 6-phosphogluconolactonase from Shigella sonnei (strain Ss046).